The sequence spans 438 residues: MSMFLDQVTIDVKAGKGGDGMVAFRREKYVPDGGPAGGDGGRGGDVVLVVEEGLRTLMDFRFNRHFKATPGENGMSKGMHGRGSEDLLVKVPPGTTVRDAETGALIGDLIENGQTLVVAKGGRGGRGNIRFASPRNPAPEIAENGEPGQERKIELELKVLADVGLVGFPSVGKSTLLSVISSARPKIGAYHFTTLVPNLGMVTTSDGRSFAAADLPGLIEGASQGVGLGTQFLRHIERTRVILHVIDMSGMEGRDPYEDYLAINKELASHNLRLMERPQIIVANKMDMPEAEENLAKFKEQLAKERTDEYADELPIFPISGVTRKGIEPLLNATADLLEVTPEFPLYEDEVVEEETVRYGFQPEGPEFTIDREPDASWVLSGEKLEKLFEMTNFDHDETVMRFARQLRGMGVDEALRARGAKDGDIVRIGNFEFEFVE.

An Obg domain is found at 2-160; the sequence is SMFLDQVTID…RKIELELKVL (159 aa). Residues 128 to 147 form a disordered region; it reads NIRFASPRNPAPEIAENGEP. The OBG-type G domain occupies 161 to 339; the sequence is ADVGLVGFPS…LLNATADLLE (179 aa). Residues 167–174, 192–196, 214–217, 284–287, and 320–322 each bind GTP; these read GFPSVGKS, FTTLV, DLPG, NKMD, and SGV. Mg(2+)-binding residues include Ser-174 and Thr-194. Positions 360–438 constitute an OCT domain; sequence GFQPEGPEFT…IGNFEFEFVE (79 aa).

The protein belongs to the TRAFAC class OBG-HflX-like GTPase superfamily. OBG GTPase family. Monomer. It depends on Mg(2+) as a cofactor.

The protein localises to the cytoplasm. Its function is as follows. An essential GTPase which binds GTP, GDP and possibly (p)ppGpp with moderate affinity, with high nucleotide exchange rates and a fairly low GTP hydrolysis rate. Plays a role in control of the cell cycle, stress response, ribosome biogenesis and in those bacteria that undergo differentiation, in morphogenesis control. The sequence is that of GTPase Obg from Enterococcus faecalis (strain ATCC 700802 / V583).